A 474-amino-acid polypeptide reads, in one-letter code: Zinc finger protein 230 (474 aa).

Positions 8–76 (VTFKDVAVFF…ETATQREGNS (69 aa)) constitute a KRAB domain. Residues 80 to 167 (TIAEAGPHED…PQQFHSGEKS (88 aa)) form a KRNB region. C2H2-type zinc fingers lie at residues 168 to 190 (HTCN…QRVH), 196 to 218 (SKCD…ERVH), 224 to 246 (FKCE…CKLH), 252 to 274 (YICE…QIIH), 280 to 302 (FKCE…CMVH), 308 to 330 (YKSE…QIIH), 336 to 358 (YNCK…QRIH), 364 to 386 (YRCE…QRVH), and 392 to 414 (YNCK…KKLH). The C2H2-type 10; atypical zinc finger occupies 420 to 442 (FKCEDCGKRLVHRSFCKDQQGDH).

This sequence belongs to the krueppel C2H2-type zinc-finger protein family.

It is found in the nucleus. In terms of biological role, may be involved in transcriptional regulation. This is Zinc finger protein 230 (ZNF230) from Homo sapiens (Human).